Reading from the N-terminus, the 1011-residue chain is Retinoblastoma-related protein (1011 aa).

The disordered stretch occupies residues 1–22 (MSQASVDMEDVKPSISLPSDDG). Residues 411–612 (TPVSTAMTTA…ERGSSMYNSL (202 aa)) form a domain A region. Residues 411–860 (TPVSTAMTTA…NEVFIPSVKP (450 aa)) form a pocket region. The interval 613 to 729 (IVARPTLAAE…PAGGGETCAE (117 aa)) is spacer. Residues 730–860 (TGINIFFNKI…NEVFIPSVKP (131 aa)) are domain B. The interval 872–903 (QKSKSSPEDSNNADSQIPGSPRLSPFPNLPDM) is disordered. Residues 873 to 889 (KSKSSPEDSNNADSQIP) are compositionally biased toward polar residues.

The protein belongs to the retinoblastoma protein (RB) family.

It localises to the nucleus. Functionally, regulator of biological processes that recruits a histone deacetylase to control gene transcription. May play a role in the entry into mitosis, negatively regulating the cell proliferation. Formation of stable complexes with geminiviridae replication-associated proteins may create a cellular environment which favors viral DNA replication. This chain is Retinoblastoma-related protein (Rb1), found in Cocos nucifera (Coconut palm).